The chain runs to 338 residues: Endonuclease V (338 aa).

Mg(2+) is bound by residues Asp52 and Asp126. The interval 253–338 (QLGVAPAQRK…PSPAWVQSPP (86 aa)) is disordered. 2 stretches are compositionally biased toward basic and acidic residues: residues 260-270 (QRKDRSQKEQR) and 287-323 (RPPE…HQED). The segment covering 328–338 (PPSPAWVQSPP) has biased composition (pro residues).

The protein belongs to the endonuclease V family. Monomer. Interacts with PABPC1; the interaction is RNA-dependent and stimulates ENDOV activity. Mg(2+) serves as cofactor. Highest levels detected in liver with high levels also found in heart, kidney and testis. Expressed at low levels in brain.

It localises to the cytoplasm. Its subcellular location is the nucleus. The protein resides in the nucleolus. The protein localises to the stress granule. In terms of biological role, endoribonuclease that specifically cleaves inosine-containing RNAs: cleaves RNA at the second phosphodiester bond 3' to inosine. Active against both single-stranded and double-stranded RNAs. Has strong preference for single-stranded RNAs (ssRNAs) toward double-stranded RNAs (dsRNAs). Cleaves mRNAs and tRNAs containing inosine. Also able to cleave structure-specific dsRNA substrates containing the specific sites 5'-IIUI-3' and 5'-UIUU-3'. Inosine is present in a number of RNAs following editing; the function of inosine-specific endoribonuclease is still unclear: it could either play a regulatory role in edited RNAs, or be involved in antiviral response by removing the hyperedited long viral dsRNA genome that has undergone A-to-I editing. Binds branched DNA structures. This Mus musculus (Mouse) protein is Endonuclease V (Endov).